The chain runs to 315 residues: tRNA dimethylallyltransferase (315 aa).

An ATP-binding site is contributed by 10-17 (GPTGVGKT). Substrate is bound at residue 12 to 17 (TGVGKT). The interval 35–38 (DSMQ) is interaction with substrate tRNA.

Belongs to the IPP transferase family. In terms of assembly, monomer. Mg(2+) is required as a cofactor.

It carries out the reaction adenosine(37) in tRNA + dimethylallyl diphosphate = N(6)-dimethylallyladenosine(37) in tRNA + diphosphate. Functionally, catalyzes the transfer of a dimethylallyl group onto the adenine at position 37 in tRNAs that read codons beginning with uridine, leading to the formation of N6-(dimethylallyl)adenosine (i(6)A). The sequence is that of tRNA dimethylallyltransferase from Thermodesulfovibrio yellowstonii (strain ATCC 51303 / DSM 11347 / YP87).